The chain runs to 445 residues: Phosphoglucosamine mutase (445 aa).

The active-site Phosphoserine intermediate is S102. 4 residues coordinate Mg(2+): S102, D241, D243, and D245. S102 carries the post-translational modification Phosphoserine.

It belongs to the phosphohexose mutase family. Mg(2+) serves as cofactor. Post-translationally, activated by phosphorylation.

The enzyme catalyses alpha-D-glucosamine 1-phosphate = D-glucosamine 6-phosphate. Its function is as follows. Catalyzes the conversion of glucosamine-6-phosphate to glucosamine-1-phosphate. The sequence is that of Phosphoglucosamine mutase from Aliivibrio fischeri (strain ATCC 700601 / ES114) (Vibrio fischeri).